A 114-amino-acid polypeptide reads, in one-letter code: Flagellar hook-basal body complex protein FliE (114 aa).

The protein belongs to the FliE family.

It is found in the bacterial flagellum basal body. The sequence is that of Flagellar hook-basal body complex protein FliE from Burkholderia vietnamiensis (strain G4 / LMG 22486) (Burkholderia cepacia (strain R1808)).